Reading from the N-terminus, the 219-residue chain is Large ribosomal subunit protein uL3 (219 aa).

A disordered region spans residues 140-163 (SASHGAHRNHRKPGSIGASSTPSR).

This sequence belongs to the universal ribosomal protein uL3 family. In terms of assembly, part of the 50S ribosomal subunit. Forms a cluster with proteins L14 and L19.

Its function is as follows. One of the primary rRNA binding proteins, it binds directly near the 3'-end of the 23S rRNA, where it nucleates assembly of the 50S subunit. The sequence is that of Large ribosomal subunit protein uL3 from Leifsonia xyli subsp. xyli (strain CTCB07).